Consider the following 156-residue polypeptide: 6,7-dimethyl-8-ribityllumazine synthase (156 aa).

5-amino-6-(D-ribitylamino)uracil is bound by residues phenylalanine 23, 57–59 (AYE), and 81–83 (AII). Position 86 to 87 (86 to 87 (ST)) interacts with (2S)-2-hydroxy-3-oxobutyl phosphate. Histidine 89 acts as the Proton donor in catalysis. Phenylalanine 114 provides a ligand contact to 5-amino-6-(D-ribitylamino)uracil. Arginine 128 contacts (2S)-2-hydroxy-3-oxobutyl phosphate.

Belongs to the DMRL synthase family.

The catalysed reaction is (2S)-2-hydroxy-3-oxobutyl phosphate + 5-amino-6-(D-ribitylamino)uracil = 6,7-dimethyl-8-(1-D-ribityl)lumazine + phosphate + 2 H2O + H(+). The protein operates within cofactor biosynthesis; riboflavin biosynthesis; riboflavin from 2-hydroxy-3-oxobutyl phosphate and 5-amino-6-(D-ribitylamino)uracil: step 1/2. Functionally, catalyzes the formation of 6,7-dimethyl-8-ribityllumazine by condensation of 5-amino-6-(D-ribitylamino)uracil with 3,4-dihydroxy-2-butanone 4-phosphate. This is the penultimate step in the biosynthesis of riboflavin. The polypeptide is 6,7-dimethyl-8-ribityllumazine synthase (Campylobacter hominis (strain ATCC BAA-381 / DSM 21671 / CCUG 45161 / LMG 19568 / NCTC 13146 / CH001A)).